The chain runs to 101 residues: Small ribosomal subunit protein uS14 (101 aa).

The protein belongs to the universal ribosomal protein uS14 family. Part of the 30S ribosomal subunit. Contacts proteins S3 and S10.

In terms of biological role, binds 16S rRNA, required for the assembly of 30S particles and may also be responsible for determining the conformation of the 16S rRNA at the A site. This Burkholderia mallei (strain NCTC 10247) protein is Small ribosomal subunit protein uS14.